Here is a 247-residue protein sequence, read N- to C-terminus: DNA polymerase sliding clamp (247 aa).

Belongs to the PCNA family. Homotrimer. The subunits circularize to form a toroid; DNA passes through its center. Replication factor C (RFC) is required to load the toroid on the DNA.

Functionally, sliding clamp subunit that acts as a moving platform for DNA processing. Responsible for tethering the catalytic subunit of DNA polymerase and other proteins to DNA during high-speed replication. The protein is DNA polymerase sliding clamp of Haloarcula marismortui (strain ATCC 43049 / DSM 3752 / JCM 8966 / VKM B-1809) (Halobacterium marismortui).